Here is a 94-residue protein sequence, read N- to C-terminus: Defensin alpha 5 (94 aa).

Residues 1-19 (MRTIAILAAILLVALQAQA) form the signal peptide. 3 disulfide bridges follow: cysteine 65-cysteine 93, cysteine 67-cysteine 82, and cysteine 72-cysteine 92.

The protein belongs to the alpha-defensin family. Homodimer. Homotetramer. Interacts with B.antracis lef/lethal factor. In terms of processing, glycosylated. Post-translationally, proteolytically cleaved at Arg-62 by trypsin. Both the propeptide form proHD5/HD5(20-94) and HD5(56-94) are cleaved into the lumenal peptide form HD5(63-94) by trypsin. Unprocessed proHD5 exerts antimicrobial activities, but peptide potency is enhanced by peptide processing. Proteolytically cleaved in duodenal fluid; derived fragments are antimicrobially active against commensal bacteria (in vitro). (Microbial infection) The disulfide bridges and homodimerization are a prerequisite for the enhancement of S.flexneri adhesion and invasion. In terms of tissue distribution, expressed in the gastrointestinal, reproductive, and urinary tracts (at protein level). Expressed in Paneth cells of the small intestine (at protein level). Expressed throughout the urothelium of the lower urinary tract and in the collecting tubules of the kidney (at protein level). Expressed in stratified squamous epithelial cells of the female genital tract epithelia, such as in vagina, ectocervix, endocervix, endometrium, and fallopian tube (at protein level). Endometrial expression correlates with stages of the menstrual cycle: Expression is low during the early proliferative phase, increased during the mid- to late proliferative phase, peaks during the early secretory phase of the cycle, and decreases during the mid- to late secretory phase.

It is found in the secreted. It localises to the cytoplasmic vesicle. Its subcellular location is the secretory vesicle. Functionally, host-defense peptide that maintains sterility in the urogenital system. Has antimicrobial activity against a wide range of bacteria, including Gram-negative E.coli, P.aeruginosa and S.typhimurium, and Gram-positive E.aerogenes, S.aureus, B.cereus, E.faecium and L.monocytogenes. Confers resistance to intestinal infection by S.typhimurium. Exhibits antimicrobial activity against enteric commensal bacteria such as B.adolescentis, L.acidophilus, B.breve, L.fermentum, B.longum and S.thermophilus. Binds to bacterial membranes and causes membrane disintegration. Induces the secretion of the chemokine IL-8 by intestinal epithelial cells. Binds to B.antracis lef/lethal factor, a major virulence factor from B.anthracis, and neutralizes its enzymatic activity. (Microbial infection) Acts as a target for S.flexneri infection by binding to the bacterium, possibly via bacterial surface proteins, and thereby augmenting infectivity via enhanced bacterial adhesion and invasion of epithelial cells and tissues. The protein is Defensin alpha 5 (DEFA5) of Homo sapiens (Human).